Consider the following 172-residue polypeptide: Ribosome maturation factor RimM (172 aa).

Residues 96–168 (DGEFYYHEII…RVQVELMEGL (73 aa)) enclose the PRC barrel domain.

This sequence belongs to the RimM family. As to quaternary structure, binds ribosomal protein uS19.

It is found in the cytoplasm. Its function is as follows. An accessory protein needed during the final step in the assembly of 30S ribosomal subunit, possibly for assembly of the head region. Essential for efficient processing of 16S rRNA. May be needed both before and after RbfA during the maturation of 16S rRNA. It has affinity for free ribosomal 30S subunits but not for 70S ribosomes. The sequence is that of Ribosome maturation factor RimM from Streptococcus agalactiae serotype Ia (strain ATCC 27591 / A909 / CDC SS700).